Consider the following 283-residue polypeptide: Formamidopyrimidine-DNA glycosylase (283 aa).

Catalysis depends on Pro2, which acts as the Schiff-base intermediate with DNA. Residue Glu3 is the Proton donor of the active site. Lys60 functions as the Proton donor; for beta-elimination activity in the catalytic mechanism. 3 residues coordinate DNA: His100, Arg119, and Arg164. An FPG-type zinc finger spans residues Trp249–Lys283. The active-site Proton donor; for delta-elimination activity is Arg273.

It belongs to the FPG family. Monomer. The cofactor is Zn(2+).

The catalysed reaction is Hydrolysis of DNA containing ring-opened 7-methylguanine residues, releasing 2,6-diamino-4-hydroxy-5-(N-methyl)formamidopyrimidine.. It catalyses the reaction 2'-deoxyribonucleotide-(2'-deoxyribose 5'-phosphate)-2'-deoxyribonucleotide-DNA = a 3'-end 2'-deoxyribonucleotide-(2,3-dehydro-2,3-deoxyribose 5'-phosphate)-DNA + a 5'-end 5'-phospho-2'-deoxyribonucleoside-DNA + H(+). In terms of biological role, involved in base excision repair of DNA damaged by oxidation or by mutagenic agents. Acts as a DNA glycosylase that recognizes and removes damaged bases. Has a preference for oxidized purines, such as 7,8-dihydro-8-oxoguanine (8-oxoG). Has AP (apurinic/apyrimidinic) lyase activity and introduces nicks in the DNA strand. Cleaves the DNA backbone by beta-delta elimination to generate a single-strand break at the site of the removed base with both 3'- and 5'-phosphates. In Prochlorococcus marinus (strain SARG / CCMP1375 / SS120), this protein is Formamidopyrimidine-DNA glycosylase.